Here is a 361-residue protein sequence, read N- to C-terminus: Deoxyribonuclease (361 aa).

Residues 1 to 24 (MMHLLRRGAFAILLIVLLPSAALA) form the signal peptide. H149 is a catalytic residue.

Belongs to the DNase I family. It depends on Mg(2+) as a cofactor. The cofactor is Ca(2+).

It is found in the secreted. Functionally, DNA nuclease able to digest short and long DNA substrate. Is resistant to ionic strength and thus active at high salt concentration. This chain is Deoxyribonuclease, found in Thioalkalivibrio sp. (strain K90mix).